A 607-amino-acid chain; its full sequence is Coronin-like protein cor-1 (607 aa).

WD repeat units follow at residues 77-117 (AHKA…LNRN), 127-167 (GHQK…ALLE), and 170-209 (GHPD…VVHE). Positions 415–564 (PTAAESVPTQ…VSAASDVGHV (150 aa)) are disordered. Residues 424–436 (QSYSERPPSSQQP) are compositionally biased toward low complexity. The segment covering 437–447 (SPRPSASPRPR) has biased composition (pro residues). Basic and acidic residues-rich tracts occupy residues 473 to 489 (SRTE…DPMK) and 517 to 533 (AAAE…RTAD). Low complexity predominate over residues 544–559 (SSRASASPRGSVSAAS). A coiled-coil region spans residues 563–602 (HVPQNMDELLEDLMKMKAVLRQHERRIRMLEEEIADRNMS).

Belongs to the WD repeat coronin family.

It is found in the cytoplasm. The protein localises to the cytoskeleton. Required to direct the migration of Q neuroblasts along the anterior axis of the body during larval development. This is dependent on its asymmetric expression in Q neuroblasts. The chain is Coronin-like protein cor-1 (cor-1) from Caenorhabditis elegans.